The primary structure comprises 336 residues: Aldo-keto reductase str7 (336 aa).

Residue Asp-57 coordinates NADP(+). Tyr-62 functions as the Proton donor in the catalytic mechanism. His-124 is a substrate binding site. NADP(+) contacts are provided by residues 154-155 (SE), Gln-174, 206-220 (SPLG…YKSP), and 283-291 (KKIKYLEEN).

Belongs to the aldo/keto reductase family. Aldo/keto reductase 2 subfamily.

It functions in the pathway mycotoxin biosynthesis. Its function is as follows. Aldo-keto reductase; part of the gene cluster that mediates the biosynthesis of strobilurin A, an antifungal polyketide that contains a key beta-methoxyacrylate toxophore that targets the complex III of the mitochondrial electron transport chain. Strobilurin biosynthesis begins with construction of benzoyl CoA by step-wise elimination of ammonia from phenylalanine by the phenylalanine ammonia-lyase str11, oxygenation by str8 and retro-Claisen reaction to form benzoic acid, which is activated to its CoA thiolester benzoyl CoA by the dedicated CoA ligase str10. Benzoyl CoA forms the starter unit for the highly reducing polyketide synthase stpks1 that produces the polyketide prestrobilutin A. The FAD-dependent oxygenase str9 then catalyzes the key oxidative rearrangement responsible for the creation of the beta-methoxyacrylate toxophore. Str9 performs epoxidation of the 2,3 olefin of prestrobilutin A, followed by Meinwald rearrangement to furnish the aldehyde intermediate. Rapid enolization of the aldehyde intermediate would give the beta-methoxyacrylate skeleton and methylations catalyzed by str2 and str3 complete the synthesis and lead to the production of strobilurin A. The short-chain dehydrogenase stl2 and the dehydrogenase str4 play a role in the shunt pathway leading to the production of bolineol. The cluster encodes no obvious halogenase gene that could be involved in production of strobilurin B, nor any obvious dimethylallyl-transferase that could be involved in the production of strobilurin G. It is possible that unknown proteins encoded in, or near, the cluster (such as str1 or stl1) may form new classes of halogenases or dimethylally-transferases, or that the responsible genes are located elsewhere on the genome. Similarly, proteins encoded by str5/str6 hydrolases appear to have no chemical role in the biosynthesis of strobilurin A. Finally, no obvious self-resistance gene is found within the cluster. The protein is Aldo-keto reductase str7 of Strobilurus tenacellus.